Here is a 426-residue protein sequence, read N- to C-terminus: UDP-N-acetylglucosamine--N-acetylmuramyl-(pentapeptide) pyrophosphoryl-undecaprenol N-acetylglucosamine transferase (426 aa).

UDP-N-acetyl-alpha-D-glucosamine contacts are provided by residues 28–30 (TGG), N140, R176, S204, I257, and Q302. Residues 369-388 (AGNGPSGMGNGHSSEQPQER) form a disordered region.

This sequence belongs to the glycosyltransferase 28 family. MurG subfamily.

Its subcellular location is the cell inner membrane. It carries out the reaction di-trans,octa-cis-undecaprenyl diphospho-N-acetyl-alpha-D-muramoyl-L-alanyl-D-glutamyl-meso-2,6-diaminopimeloyl-D-alanyl-D-alanine + UDP-N-acetyl-alpha-D-glucosamine = di-trans,octa-cis-undecaprenyl diphospho-[N-acetyl-alpha-D-glucosaminyl-(1-&gt;4)]-N-acetyl-alpha-D-muramoyl-L-alanyl-D-glutamyl-meso-2,6-diaminopimeloyl-D-alanyl-D-alanine + UDP + H(+). Its pathway is cell wall biogenesis; peptidoglycan biosynthesis. In terms of biological role, cell wall formation. Catalyzes the transfer of a GlcNAc subunit on undecaprenyl-pyrophosphoryl-MurNAc-pentapeptide (lipid intermediate I) to form undecaprenyl-pyrophosphoryl-MurNAc-(pentapeptide)GlcNAc (lipid intermediate II). This chain is UDP-N-acetylglucosamine--N-acetylmuramyl-(pentapeptide) pyrophosphoryl-undecaprenol N-acetylglucosamine transferase, found in Xanthomonas axonopodis pv. citri (strain 306).